The primary structure comprises 229 residues: MKKTSRRLKTLKSKVDPKLYSLNEAVTILRATSNAKFKETAEAHISLGLNPKYADQQLRATVILPKGTGKLVKVAVIAKGEKLTEAMNAGADISGSEELIDEISKGRLDFDKLIATPDIMPLIAKLGRVLGPRGLMPSPKAGTVTLDITKSINEFKGGKVEYRVDRTGIIHVPFGKSSFPEEDLVMNLQTIKDSIDKNKPSGSKGKYWKTFFLSSTMGPSIQIDITSLL.

Belongs to the universal ribosomal protein uL1 family. Part of the 50S ribosomal subunit.

It localises to the plastid. The protein resides in the chloroplast. Functionally, binds directly to 23S rRNA. Might be involved in E site tRNA release (Potential). The polypeptide is Large ribosomal subunit protein uL1c (rpl1) (Porphyra purpurea (Red seaweed)).